The primary structure comprises 267 residues: MEWDKAKASSGEAVDDRGGGEGGLGYVKVMTDEQMEVLRKQISIYATICEQLVEMHRALTAQQDSIAGMRLGNLYCDPLMVPGGHKITARQRWTPTPMQLQILENIFDQGNGTPSKQKIKDITAELSQHGQISETNVYNWFQNRRARSKRKQAALPNNNAESEAEADEESPTDKKPKSDRPLHQNIAMRDHNSERISEMHHFDTEHEQIRRMMYASNDSSSRSSGSLGQMSFYDNVMSNPRIDHFLGKVESPGSFPHMRSGESFDMY.

The segment at residues 88-152 (TARQRWTPTP…NRRARSKRKQ (65 aa)) is a DNA-binding region (homeobox; WUS-type). The interval 148 to 195 (SKRKQAALPNNNAESEAEADEESPTDKKPKSDRPLHQNIAMRDHNSER) is disordered. The segment covering 171–195 (PTDKKPKSDRPLHQNIAMRDHNSER) has biased composition (basic and acidic residues).

The protein belongs to the WUS homeobox family.

It localises to the nucleus. Its function is as follows. Transcription factor which may be involved in developmental processes. In Oryza sativa subsp. japonica (Rice), this protein is WUSCHEL-related homeobox 8 (WOX8).